We begin with the raw amino-acid sequence, 128 residues long: Small ribosomal subunit protein uS13 (128 aa).

Residues 97 to 128 are disordered; it reads PVRGQRTRSNARTRKGPRPSRIKTKKKKEQTV. Over residues 101 to 128 the composition is skewed to basic residues; that stretch reads QRTRSNARTRKGPRPSRIKTKKKKEQTV.

This sequence belongs to the universal ribosomal protein uS13 family. As to quaternary structure, part of the 30S ribosomal subunit. Forms a loose heterodimer with protein S19. Forms two bridges to the 50S subunit in the 70S ribosome.

In terms of biological role, located at the top of the head of the 30S subunit, it contacts several helices of the 16S rRNA. In the 70S ribosome it contacts the 23S rRNA (bridge B1a) and protein L5 of the 50S subunit (bridge B1b), connecting the 2 subunits; these bridges are implicated in subunit movement. Contacts the tRNAs in the A and P-sites. The protein is Small ribosomal subunit protein uS13 of Pseudothermotoga lettingae (strain ATCC BAA-301 / DSM 14385 / NBRC 107922 / TMO) (Thermotoga lettingae).